Consider the following 250-residue polypeptide: Cell division protein ZapD (250 aa).

It belongs to the ZapD family. As to quaternary structure, interacts with FtsZ.

It localises to the cytoplasm. Functionally, cell division factor that enhances FtsZ-ring assembly. Directly interacts with FtsZ and promotes bundling of FtsZ protofilaments, with a reduction in FtsZ GTPase activity. The polypeptide is Cell division protein ZapD (Pectobacterium carotovorum subsp. carotovorum (strain PC1)).